Here is a 473-residue protein sequence, read N- to C-terminus: MSFTVAIVGRPNVGKSTLFNRLVGKKLALVDDTPGVTRDRRPGDARLMGLTFTIIDTAGLEEADEESLQGRMRAQTEAAIDEADLSLFVVDAKNGLTPVDTALAEMLRRRGKPVVLVANKSEARGSDSGFYDAYTLGLGEPTPISAEHGQGMIDLRDAIVAAIGKDRAYAKEDVAVTDVDIPPSESEADGEDEEPVYDDTKPLRVAIVGRPNAGKSTLINRFLGEDRLLTGPEAGITRDSISVEWDWRGRTIKMFDTAGMRRKARVTEKLEKLSVADALRAIRFAETVVIVFDATIPFEKQDLQIVDLVLREGRAAVLAFNKWDMIEDRQAVLADLREKTDRLLPQARGIRAVPISGQTGWGLDKLMQSIIDTDRVWNKRISTARLNRWLETQQIQHPPPAVSGRRIKLKYMTQVKARPPAFMISCTRSDALPESYTRYLINGLRADFDMPSVPIRIHFRSAENPYESKKKRT.

2 EngA-type G domains span residues 3 to 167 (FTVA…GKDR) and 203 to 378 (LRVA…RVWN). Residues 9–16 (GRPNVGKS), 56–60 (DTAGL), 119–122 (NKSE), 209–216 (GRPNAGKS), 256–260 (DTAGM), and 321–324 (NKWD) each bind GTP. Residues 379–463 (KRISTARLNR…PIRIHFRSAE (85 aa)) enclose the KH-like domain.

This sequence belongs to the TRAFAC class TrmE-Era-EngA-EngB-Septin-like GTPase superfamily. EngA (Der) GTPase family. As to quaternary structure, associates with the 50S ribosomal subunit.

Functionally, GTPase that plays an essential role in the late steps of ribosome biogenesis. The chain is GTPase Der from Rhizobium etli (strain CIAT 652).